A 284-amino-acid chain; its full sequence is MKLCDFEVGLDQPFFLIAGTCVVESEQMTIDTAGRLKEICEKLNVPFIYKSSYDKANRSSGKSFRGLGMDEGLRILGEVKRQLGLPVLTDVHSIDEIEQVASVVDVLQTPAFLCRQTDFIHACARSGKPVNIKKGQFLAPHDMKNVIDKARDAAREAGLSEDRFMACERGVSFGYNNLVSDMRSLAIMRETNAPVVFDATHSVQLPGGQGTSSGGQREFVPVLARAAVATGVAGLFMETHPNPAEAKSDGPNAVPLNRMGALLETLVTLDQAVKRNPFLENDFN.

The protein belongs to the KdsA family.

It is found in the cytoplasm. It catalyses the reaction D-arabinose 5-phosphate + phosphoenolpyruvate + H2O = 3-deoxy-alpha-D-manno-2-octulosonate-8-phosphate + phosphate. It functions in the pathway carbohydrate biosynthesis; 3-deoxy-D-manno-octulosonate biosynthesis; 3-deoxy-D-manno-octulosonate from D-ribulose 5-phosphate: step 2/3. The protein operates within bacterial outer membrane biogenesis; lipopolysaccharide biosynthesis. This chain is 2-dehydro-3-deoxyphosphooctonate aldolase, found in Burkholderia orbicola (strain MC0-3).